An 887-amino-acid polypeptide reads, in one-letter code: MDWQPDEQGLQQVLQLLKDSQSPNTATQRIVQDKLKQLNQFPDFNNYLIFVLTRLKSEDEPTRSLSGLILKNNVKAHYQSFPPPVADFIKQECLNNIGDASSLIRATIGILITTIASKGELQMWPELLPQLCNLLNSEDYNTCEGAFGALQKICEDSSELLDSDALNRPLNIMIPKFLQFFKHCSPKIRSHAIACVNQFIMDRAQALMDNIDTFIEHLFALAVDDDPEVRKNVCRALVMLLEVRIDRLIPHMHSIIQYMLQRTQDHDENVALEACEFWLTLAEQPICKEVLASHLVQLIPILVNGMKYSEIDIILLKGDVEEDEAVPDSEQDIKPRFHKSRTVTLTHEAERPDSSEDAEDDDDDDALSDWNLRKCSAAALDVLANVFREELLPHLLPLLKGLLFHPEWVVKESGILVLGAIAEGCMQGMVPYLPELIPHLIQCLSDKKALVRSIACWTLSRYAHWVVSQPPDMHLKPLMTELLKRILDGNKRVQEAACSAFATLEEEACTELVPYLSYILDTLVFAFGKYQHKNLLILYDAIGTLADSVGHHLNQPEYIQKLMPPLIQKWNELKDEDKDLFPLLECLSSVATALQSGFLPYCEPVYQRCVTLVQKTLAQAMMYTQHPEQYEAPDKDFMIVALDLLSGLAEGLGGHVEQLVARSNIMTLLFQCMQDSMPEVRQSSFALLGDLTKACFIHVKPCIAEFMPILGTNLNPEFISVCNNATWAIGEICMQMGAEMQPYVQMVLNNLVEIINRPNTPKTLLENTAITIGRLGYVCPQEVAPMLQQFIRPWCTSLRNIRDNEEKDSAFRGICMMIGVNPGGVVQDFIFFCDAVASWVSPKDDLRDMFYKILHGFKDQVGEENWQQFSEQFPPLLKERLAAFYGV.

HEAT repeat units follow at residues 9-36 (GLQQ…DKLK), 41-79 (FPDF…AHYQ), 88-121 (FIKQ…KGEL), 127-164 (LLPQ…LDSD), 171-201 (NIMI…QFIM), 214-241 (FIEH…VMLL), 253-280 (HSII…FWLT), 296-386 (VQLI…LANV), 394-422 (HLLP…GAIA), 434-461 (PELI…TLSR), 475-508 (LKPL…EEEA), 516-549 (LSYI…ADSV), 557-595 (EYIQ…TALQ), 603-654 (EPVY…GLGG), 665-696 (IMTL…KACF), 704-737 (AEFM…MQMG), 745-780 (QMVL…YVCP), 788-821 (QQFI…IGVN), 830-861 (IFFC…KDQV), and 864-884 (ENWQ…LAAF). The 69-residue stretch at 31 to 99 (VQDKLKQLNQ…KQECLNNIGD (69 aa)) folds into the Importin N-terminal domain. The disordered stretch occupies residues 344-363 (TLTHEAERPDSSEDAEDDDD). An N6-acetyllysine modification is found at K852.

This sequence belongs to the importin beta family. Importin beta-2 subfamily.

The protein localises to the cytoplasm. It localises to the nucleus. Functionally, probably functions in nuclear protein import as nuclear transport receptor. Serves as receptor for nuclear localization signals (NLS) in cargo substrates. Is thought to mediate docking of the importin/substrate complex to the nuclear pore complex (NPC) through binding to nucleoporin and the complex is subsequently translocated through the pore by an energy requiring, Ran-dependent mechanism. At the nucleoplasmic side of the NPC, Ran binds to the importin, the importin/substrate complex dissociates and importin is re-exported from the nucleus to the cytoplasm where GTP hydrolysis releases Ran. The directionality of nuclear import is thought to be conferred by an asymmetric distribution of the GTP- and GDP-bound forms of Ran between the cytoplasm and nucleus. This is Transportin-2 (Tnpo2) from Mus musculus (Mouse).